The following is a 400-amino-acid chain: Outer membrane protein alpha (400 aa).

An N-terminal signal peptide occupies residues M1 to A20. The SLH domain occupies F21–G81. Residues D85–L379 are a coiled coil. 3 consecutive repeat copies span residues V208–K232, V251–K275, and V326–K350. The tract at residues V208–K350 is 3 X 25 AA approximate repeat. Residues S380–K400 traverse the membrane as a helical segment.

In terms of assembly, homotetramer.

Its subcellular location is the cell outer membrane. Links the outer membrane to the inner membrane. Long fibrous protein that could serve to separate the two membranes. The sequence is that of Outer membrane protein alpha (omp-alpha) from Thermotoga maritima (strain ATCC 43589 / DSM 3109 / JCM 10099 / NBRC 100826 / MSB8).